Here is a 129-residue protein sequence, read N- to C-terminus: Large ribosomal subunit protein eL32 (129 aa).

This sequence belongs to the eukaryotic ribosomal protein eL32 family.

In Archaeoglobus fulgidus (strain ATCC 49558 / DSM 4304 / JCM 9628 / NBRC 100126 / VC-16), this protein is Large ribosomal subunit protein eL32 (rpl32e).